Here is a 463-residue protein sequence, read N- to C-terminus: Protein MRG3-like (463 aa).

Residues 54-74 form a helical membrane-spanning segment; the sequence is WVLSTGIVSFIAFNIWWVYWP. TPR repeat units lie at residues 84 to 118, 128 to 161, 358 to 389, and 409 to 442; these read KILR…CKAE, TGIE…FYNE, ELIR…ANEN, and SLAH…SEMI.

It belongs to the MGR3 family.

The protein resides in the membrane. The sequence is that of Protein MRG3-like from Saccharomyces cerevisiae (strain ATCC 204508 / S288c) (Baker's yeast).